The following is a 380-amino-acid chain: MRVLAALSGGVDSAVAAARAVDAGHDVVGVHMALSRTRAQHRTGSRGCCSIEDASDARRAADVLGIPFYVWDLSEEFTDTVVADFLSEYAAGRTPNPCVRCNEHIKFSALLDRGLALGFDAVATGHYARIERGAAGVPELHRAADAAKDQSYVLAVMGPERLARSLFPLGEVPTKDAVRAEAAARGLSVSAKPDSYDICFVADGDTQGFLRSHLGSQPGPVLDTDGREVGAHDGAYAFTVGQRKGLRLPRPAADGRPRYVVDVRTASNTVVVGPAELLSVRDVLGERPVWLAEEPHEWTDATVQVRAHGAALPARIRTVTDDDGASHLAARLAEPLRGLAAGQSVVAYDGTRVLGQATVAATGRDAVAAAPALAGVGSTA.

ATP is bound by residues 6 to 13 (ALSGGVDS) and methionine 32. The active-site Nucleophile is the cysteine 101. The cysteines at positions 101 and 199 are disulfide-linked. ATP is bound at residue glycine 125. The interval 148–150 (KDQ) is interaction with tRNA. Cysteine 199 serves as the catalytic Cysteine persulfide intermediate.

This sequence belongs to the MnmA/TRMU family.

It is found in the cytoplasm. The catalysed reaction is S-sulfanyl-L-cysteinyl-[protein] + uridine(34) in tRNA + AH2 + ATP = 2-thiouridine(34) in tRNA + L-cysteinyl-[protein] + A + AMP + diphosphate + H(+). Its function is as follows. Catalyzes the 2-thiolation of uridine at the wobble position (U34) of tRNA, leading to the formation of s(2)U34. The chain is tRNA-specific 2-thiouridylase MnmA from Beutenbergia cavernae (strain ATCC BAA-8 / DSM 12333 / CCUG 43141 / JCM 11478 / NBRC 16432 / NCIMB 13614 / HKI 0122).